A 298-amino-acid polypeptide reads, in one-letter code: Nucleotide-binding protein GK3066 (298 aa).

Glycine 17 to threonine 24 lines the ATP pocket. GTP is bound at residue aspartate 68–serine 71.

The protein belongs to the RapZ-like family.

Functionally, displays ATPase and GTPase activities. The sequence is that of Nucleotide-binding protein GK3066 from Geobacillus kaustophilus (strain HTA426).